The sequence spans 89 residues: Small ribosomal subunit protein uS15 (89 aa).

This sequence belongs to the universal ribosomal protein uS15 family. In terms of assembly, part of the 30S ribosomal subunit. Forms a bridge to the 50S subunit in the 70S ribosome, contacting the 23S rRNA.

One of the primary rRNA binding proteins, it binds directly to 16S rRNA where it helps nucleate assembly of the platform of the 30S subunit by binding and bridging several RNA helices of the 16S rRNA. In terms of biological role, forms an intersubunit bridge (bridge B4) with the 23S rRNA of the 50S subunit in the ribosome. This Blochmanniella pennsylvanica (strain BPEN) protein is Small ribosomal subunit protein uS15.